Here is a 389-residue protein sequence, read N- to C-terminus: Gastricsin (389 aa).

Residues 1–16 form the signal peptide; that stretch reads MKWMVVALVCLQLLEA. A propeptide spans 17–59 (activation peptide); it reads KVTKVTLKKFKSIRENLREQGLLEDFLKTNHYDPAQKYHFGDF. The 314-residue stretch at 73–386 folds into the Peptidase A1 domain; it reads YFGEISIGTP…DMGNNRVGFA (314 aa). The active site involves aspartate 91. Intrachain disulfides connect cysteine 104/cysteine 109 and cysteine 268/cysteine 272. The active site involves aspartate 277. Residues cysteine 311 and cysteine 344 are joined by a disulfide bond.

It belongs to the peptidase A1 family.

Its subcellular location is the secreted. The enzyme catalyses More restricted specificity than pepsin A, but shows preferential cleavage at Tyr-|-Xaa bonds. High activity on hemoglobin.. In terms of biological role, hydrolyzes a variety of proteins. In Suncus murinus (Asian house shrew), this protein is Gastricsin (PGC).